Consider the following 345-residue polypeptide: NADH-quinone oxidoreductase subunit H (345 aa).

8 consecutive transmembrane segments (helical) span residues 15–35, 82–102, 115–135, 161–181, 190–210, 240–262, 278–298, and 309–329; these read MLLQ…FMVY, FVYF…FVVI, VGIL…IMGG, LGLI…TAIV, LLNW…VSAL, YLLF…SLLF, WWMV…KAIV, and IGWK…AILA.

Belongs to the complex I subunit 1 family. In terms of assembly, NDH-1 is composed of at least 14 different subunits, Nqo1 to Nqo14. The complex has a L-shaped structure, with the hydrophobic arm (subunits Nqo7, Nqo8, Nqo10 to Nqo14) embedded in the inner membrane and the hydrophilic peripheral arm (subunits Nqo1 to Nqo6, Nqo9) protruding into the bacterial cytoplasm. The hydrophilic domain contains all the redox centers. NADH-quinone oxidoreductase forms a supercomplex with ubiquinol-cytochrome c reductase complex (complex III or cytochrome b-c1 complex) and cytochrome c oxidase (complex IV), which stabilizes the NADH-quinone oxidoreductase complex.

It localises to the cell inner membrane. The enzyme catalyses a quinone + NADH + 5 H(+)(in) = a quinol + NAD(+) + 4 H(+)(out). NDH-1 shuttles electrons from NADH, via FMN and iron-sulfur (Fe-S) centers, to quinones in the respiratory chain. The immediate electron acceptor for the enzyme in this species is believed to be ubiquinone. Couples the redox reaction to proton translocation (for every two electrons transferred, four hydrogen ions are translocated across the cytoplasmic membrane), and thus conserves the redox energy in a proton gradient. This subunit may bind ubiquinone. The protein is NADH-quinone oxidoreductase subunit H of Paracoccus denitrificans (strain Pd 1222).